A 187-amino-acid chain; its full sequence is Peptide deformylase 2 (187 aa).

Cys-107 and His-149 together coordinate Fe cation. The active site involves Glu-150. His-153 is a Fe cation binding site.

Belongs to the polypeptide deformylase family. Requires Fe(2+) as cofactor.

The enzyme catalyses N-terminal N-formyl-L-methionyl-[peptide] + H2O = N-terminal L-methionyl-[peptide] + formate. In terms of biological role, removes the formyl group from the N-terminal Met of newly synthesized proteins. Requires at least a dipeptide for an efficient rate of reaction. N-terminal L-methionine is a prerequisite for activity but the enzyme has broad specificity at other positions. This is Peptide deformylase 2 from Gloeobacter violaceus (strain ATCC 29082 / PCC 7421).